The sequence spans 30 residues: Basic phospholipase A2 CM-I (30 aa).

It belongs to the phospholipase A2 family. Group I subfamily. Ca(2+) is required as a cofactor. Expressed by the venom gland.

It localises to the secreted. The catalysed reaction is a 1,2-diacyl-sn-glycero-3-phosphocholine + H2O = a 1-acyl-sn-glycero-3-phosphocholine + a fatty acid + H(+). Snake venom phospholipase A2 (PLA2) that shows weak anticoagulant activity. Is more catalytically active than the strong anticoagulant protein CM-IV found in this venom. Acts by inhibiting the complex composed of tissue factor (F3) and coagulation factor VIIa (F7) (TF-VIIa complex) by only enzymatic mechanism. PLA2 catalyzes the calcium-dependent hydrolysis of the 2-acyl groups in 3-sn-phosphoglycerides. This is Basic phospholipase A2 CM-I from Naja nigricollis (Black-necked spitting cobra).